The sequence spans 779 residues: Glucan endo-1,3-beta-D-glucosidase 2 (779 aa).

The disordered stretch occupies residues 1-71; it reads MCYSRQAIPP…SNPLADSQVN (71 aa). Positions 57-71 are enriched in polar residues; sequence RTPSSSNPLADSQVN. Positions 73-309 are beta-sandwich subdomain; that stretch reads DNIFQSPVLS…NGLICQLSAD (237 aa). The 707-residue stretch at 73-779 folds into the GH81 domain; that stretch reads DNIFQSPVLS…WSLAYSGAFS (707 aa). The segment at 309-400 is alpha/beta subdomain; the sequence is DSVPSIDMAA…LTNSFDMQVQ (92 aa). Positions 375–779 are sufficient for catalytic activity; it reads IASSLDSTVK…WSLAYSGAFS (405 aa). Positions 415–779 are (alpha/beta)6 barrel subdomain; sequence NKKADYSQEK…WSLAYSGAFS (365 aa). Asp526 is a catalytic residue. Residues His530, Asp607, Glu609, and Glu613 each contribute to the (1,3-beta-D-glucosyl)n site. Active-site residues include Glu609 and Glu613. The may provide specificity for triple-helical beta-glucan stretch occupies residues 678-680; it reads KID. Tyr691 contributes to the (1,3-beta-D-glucosyl)n binding site.

The protein belongs to the glycosyl hydrolase 81 family.

It is found in the cytoplasm. The enzyme catalyses Hydrolysis of (1-&gt;3)-beta-D-glucosidic linkages in (1-&gt;3)-beta-D-glucans.. With respect to regulation, inhibited by mercury ions. Functionally, cleaves internal linkages in 1,3-beta-glucan. The polypeptide is Glucan endo-1,3-beta-D-glucosidase 2 (Saccharomyces cerevisiae (strain ATCC 204508 / S288c) (Baker's yeast)).